We begin with the raw amino-acid sequence, 124 residues long: Small ribosomal subunit protein bS6 (124 aa).

The segment at 97 to 124 (TGPSPMMKEVQREEAKKAAAAQPTEAQA) is disordered. Low complexity predominate over residues 114–124 (AAAAQPTEAQA).

Belongs to the bacterial ribosomal protein bS6 family.

Its function is as follows. Binds together with bS18 to 16S ribosomal RNA. The protein is Small ribosomal subunit protein bS6 of Paraburkholderia phymatum (strain DSM 17167 / CIP 108236 / LMG 21445 / STM815) (Burkholderia phymatum).